We begin with the raw amino-acid sequence, 259 residues long: Deoxyribose-phosphate aldolase (259 aa).

Aspartate 102 (proton donor/acceptor) is an active-site residue. Lysine 167 (schiff-base intermediate with acetaldehyde) is an active-site residue. The Proton donor/acceptor role is filled by lysine 201.

It belongs to the DeoC/FbaB aldolase family. DeoC type 2 subfamily.

The protein resides in the cytoplasm. It catalyses the reaction 2-deoxy-D-ribose 5-phosphate = D-glyceraldehyde 3-phosphate + acetaldehyde. It participates in carbohydrate degradation; 2-deoxy-D-ribose 1-phosphate degradation; D-glyceraldehyde 3-phosphate and acetaldehyde from 2-deoxy-alpha-D-ribose 1-phosphate: step 2/2. Its function is as follows. Catalyzes a reversible aldol reaction between acetaldehyde and D-glyceraldehyde 3-phosphate to generate 2-deoxy-D-ribose 5-phosphate. This Escherichia coli O1:K1 / APEC protein is Deoxyribose-phosphate aldolase.